We begin with the raw amino-acid sequence, 434 residues long: MPNRKASRNAYYFFVQEKIPELRRRGLPVARVADAIPYCSADWALLREEEKEKYAEMAREWRAAQGKDSGPSEKQKPVFTPLRKPGMLVPKQNVSPPDMSTLSLKGDQALLGGIFYFLNIFSHGELPPHCEQRFLPCEIGCVKYSLQEGIMADFHSFINPGEIPRGFRFHCQAASDSSHKIPISNFERGHNQATVLQNLYRFIHPNPGNWPPIYCKSDDRTRVNWCLKHMAKASEIRQDLQLLTVEDLVVGIYQQKFLKEPSKTWIRSLLDVAMWDYSSNTRCKWHEENDILFCALAVCKKIAYCISNSLATLFGIQLTEAHVPLQDYEASNSVTPKMVVLDAGRYQKLRVGSSGFSHFNSANQEQRSNTPIGDYPSRAKISGQNSSVRGRGITRLLESISNSSSNIHKFSNCDTSLSSYMSQKDGYKSFSSLS.

Residues 4–73 (RKASRNAYYF…AQGKDSGPSE (70 aa)) constitute a DNA-binding region (HMG box). Disordered stretches follow at residues 62–94 (RAAQGKDSGPSEKQKPVFTPLRKPGMLVPKQNV) and 357–385 (SHFNSANQEQRSNTPIGDYPSRAKISGQN). Residues 357–371 (SHFNSANQEQRSNTP) are compositionally biased toward polar residues.

The protein belongs to the maelstrom family. Interacts with SMARCB1, SIN3B and DDX4. Interacts with piRNA-associated proteins TDRD1, PIWIL1 and PIWIL2. Interacts with TEX19.

It localises to the cytoplasm. The protein resides in the nucleus. Functionally, plays a central role during spermatogenesis by repressing transposable elements and preventing their mobilization, which is essential for the germline integrity. Acts via the piRNA metabolic process, which mediates the repression of transposable elements during meiosis by forming complexes composed of piRNAs and Piwi proteins and governs the methylation and subsequent repression of transposons. Its association with piP-bodies suggests a participation in the secondary piRNAs metabolic process. Required for the localization of germ-cell factors to the meiotic nuage. In Macaca fascicularis (Crab-eating macaque), this protein is Protein maelstrom homolog (MAEL).